The primary structure comprises 239 residues: Cytochrome b6-f complex iron-sulfur subunit 1, cyanelle (239 aa).

The transit peptide at 1–60 (MAFTTTAVVAPRGAKITGQSSTCAIQNGKTVAVGTSKQVGSFKPVFAAAKPAKETTFSVS) directs the protein to the cyanelle. Residues 81-101 (LLGAIAGPVAGAGGPFVSFLV) traverse the membrane as a helical segment. Residues 125-221 (VSSWLETHKP…VSVLEDGVVA (97 aa)) enclose the Rieske domain. Residues C167, H169, C185, and H188 each contribute to the [2Fe-2S] cluster site. C172 and C187 are joined by a disulfide.

The protein belongs to the Rieske iron-sulfur protein family. In terms of assembly, the 4 large subunits of the cytochrome b6-f complex are cytochrome b6, subunit IV (17 kDa polypeptide, petD), cytochrome f and the Rieske protein, while the 4 small subunits are petG, petL, petM and petN. The complex functions as a dimer. It depends on [2Fe-2S] cluster as a cofactor.

It is found in the plastid. Its subcellular location is the cyanelle thylakoid membrane. The catalysed reaction is 2 oxidized [plastocyanin] + a plastoquinol + 2 H(+)(in) = 2 reduced [plastocyanin] + a plastoquinone + 4 H(+)(out). Component of the cytochrome b6-f complex, which mediates electron transfer between photosystem II (PSII) and photosystem I (PSI), cyclic electron flow around PSI, and state transitions. The polypeptide is Cytochrome b6-f complex iron-sulfur subunit 1, cyanelle (petC-1) (Cyanophora paradoxa).